Here is a 241-residue protein sequence, read N- to C-terminus: B-cell receptor-associated protein 29 (241 aa).

Over 1 to 6 the chain is Lumenal; sequence MTLQWA. Residues 7–27 traverse the membrane as a helical segment; that stretch reads AVATFLYAEIGLILIFCLPFI. The Cytoplasmic segment spans residues 28–43; it reads PPQRWQKIFSFNVWGK. A helical transmembrane segment spans residues 44-64; it reads IATFWNKAFLTIIILLIVLFL. At 65–103 the chain is on the lumenal side; the sequence is DAVREVRKYSSVHTIEKSSTSRPDAYEHTQMKLFRSQRN. The chain crosses the membrane as a helical span at residues 104-124; sequence LYISGFSLFFWLVLRRLVTLI. Residues 125 to 241 lie on the Cytoplasmic side of the membrane; sequence TQLAKELSNK…RLERGNKKRL (117 aa). Positions 166–233 form a coiled coil; it reads GKDEECVLEA…KEHSELQDRL (68 aa). A disordered region spans residues 198-223; it reads LSKAQNDVMEMKMQSERLSKEYDQLL. The span at 206 to 223 shows a compositional bias: basic and acidic residues; that stretch reads MEMKMQSERLSKEYDQLL. Residues 238–241 carry the Di-lysine motif motif; sequence KKRL.

Belongs to the BCAP29/BCAP31 family. In terms of assembly, homodimer. Heterodimer with BCAP31. Binds CASP8 (isoform 9) as a complex containing BCAP31, BCAP29, BCL2 and/or BCL2L1. Interacts with VAMP3, VAMP1 and membrane IgD immunoglobulins. May interact with ACTG1 and non-muscle myosin II.

It is found in the endoplasmic reticulum membrane. Functionally, may play a role in anterograde transport of membrane proteins from the endoplasmic reticulum to the Golgi. May be involved in CASP8-mediated apoptosis. This Homo sapiens (Human) protein is B-cell receptor-associated protein 29 (BCAP29).